Reading from the N-terminus, the 317-residue chain is Beta-ketoacyl-[acyl-carrier-protein] synthase III (317 aa).

Residues Cys112 and His244 contribute to the active site. The ACP-binding stretch occupies residues 245–249; sequence QANLR. The active site involves Asn274.

Belongs to the thiolase-like superfamily. FabH family. In terms of assembly, homodimer.

It localises to the cytoplasm. The catalysed reaction is malonyl-[ACP] + acetyl-CoA + H(+) = 3-oxobutanoyl-[ACP] + CO2 + CoA. It participates in lipid metabolism; fatty acid biosynthesis. In terms of biological role, catalyzes the condensation reaction of fatty acid synthesis by the addition to an acyl acceptor of two carbons from malonyl-ACP. Catalyzes the first condensation reaction which initiates fatty acid synthesis and may therefore play a role in governing the total rate of fatty acid production. Possesses both acetoacetyl-ACP synthase and acetyl transacylase activities. Its substrate specificity determines the biosynthesis of branched-chain and/or straight-chain of fatty acids. The protein is Beta-ketoacyl-[acyl-carrier-protein] synthase III of Enterobacter sp. (strain 638).